Here is a 1176-residue protein sequence, read N- to C-terminus: Growth-differentiation transition protein 5 (1176 aa).

Positions M1–A25 are cleaved as a signal peptide. Topologically, residues D26 to N913 are extracellular. The helical transmembrane segment at L914 to G934 threads the bilayer. Over R935 to F1176 the chain is Cytoplasmic. Low complexity-rich tracts occupy residues S965–I974 and P1053–S1066. 2 disordered regions span residues S965–E985 and V1050–T1080. The segment covering S1067–P1078 has biased composition (pro residues).

The protein belongs to the GDT family.

The protein localises to the membrane. In Dictyostelium discoideum (Social amoeba), this protein is Growth-differentiation transition protein 5 (gdt5).